The chain runs to 83 residues: Short neurotoxin 3FTx-Oxy3 (83 aa).

The signal sequence occupies residues 1 to 21 (MKTLLLTLVVVTIVCLDLGYT). 4 disulfides stabilise this stretch: Cys-24–Cys-45, Cys-38–Cys-62, Cys-64–Cys-75, and Cys-76–Cys-81.

The protein belongs to the three-finger toxin family. Short-chain subfamily. Type I alpha-neurotoxin sub-subfamily. Expressed by the venom gland.

It localises to the secreted. Its function is as follows. Binds to muscle nicotinic acetylcholine receptor (nAChR) and inhibit acetylcholine from binding to the receptor, thereby impairing neuromuscular transmission. In Oxyuranus microlepidotus (Inland taipan), this protein is Short neurotoxin 3FTx-Oxy3.